The primary structure comprises 321 residues: Altered inheritance of mitochondria protein 18, mitochondrial (321 aa).

Residues 1–72 (MDRGRCANML…LLATSLYYRD (72 aa)) constitute a mitochondrion transit peptide.

Belongs to the AIM18/AIM46 family.

The protein localises to the mitochondrion. The polypeptide is Altered inheritance of mitochondria protein 18, mitochondrial (AIM18) (Saccharomyces cerevisiae (strain AWRI1631) (Baker's yeast)).